We begin with the raw amino-acid sequence, 134 residues long: Arginine decarboxylase proenzyme (134 aa).

The active-site Schiff-base intermediate with substrate; via pyruvic acid is S82. S82 is modified (pyruvic acid (Ser); by autocatalysis). Catalysis depends on H87, which acts as the Proton acceptor; for processing activity. The active-site Proton donor; for catalytic activity is C102.

It belongs to the prokaryotic AdoMetDC family. Type 1 subfamily. In terms of assembly, heterooctamer of four alpha and four beta chains arranged as a tetramer of alpha/beta heterodimers. Requires pyruvate as cofactor. Is synthesized initially as an inactive proenzyme. Formation of the active enzyme involves a self-maturation process in which the active site pyruvoyl group is generated from an internal serine residue via an autocatalytic post-translational modification. Two non-identical subunits are generated from the proenzyme in this reaction, and the pyruvate is formed at the N-terminus of the alpha chain, which is derived from the carboxyl end of the proenzyme. The post-translation cleavage follows an unusual pathway, termed non-hydrolytic serinolysis, in which the side chain hydroxyl group of the serine supplies its oxygen atom to form the C-terminus of the beta chain, while the remainder of the serine residue undergoes an oxidative deamination to produce ammonia and the pyruvoyl group blocking the N-terminus of the alpha chain.

It carries out the reaction L-arginine + H(+) = agmatine + CO2. It participates in amine and polyamine biosynthesis; agmatine biosynthesis; agmatine from L-arginine: step 1/1. Highly competitively inhibited by L-argininamide and L-arginine methyl ester. Also inhibited by alpha-difluoromethylarginine. Is not stimulated by potassium chloride as observed for other decarboxylases. Its function is as follows. Specifically catalyzes the decarboxylation of L-arginine to agmatine. Is also able to decarboxylate L-canavanine, although less efficiently. Has no S-adenosylmethionine decarboxylase (AdoMetDC) activity. The protein is Arginine decarboxylase proenzyme of Saccharolobus solfataricus (strain ATCC 35092 / DSM 1617 / JCM 11322 / P2) (Sulfolobus solfataricus).